Reading from the N-terminus, the 383-residue chain is Aquaporin-5 (383 aa).

Over 1 to 46 (MSVTTLNGQPTLNISGPGQTALSRLDPLKKVFTKFFSSIPQKVRGH) the chain is Cytoplasmic. A helical transmembrane segment spans residues 47–67 (VVAVIGELIGTTAFLFIAFSA). Residues 68–93 (AEVALASANDNKGDKVSYETKSISTT) lie on the Extracellular side of the membrane. Residues 94 to 114 (QILFIAFGAGISLVVNAWTFF) traverse the membrane as a helical segment. Residue Arg115 is a topological domain, cytoplasmic. A helical membrane pass occupies residues 116-136 (ISGGLFDPAVSIALFFVGAID). The NPA 1 signature appears at 122-124 (DPA). At 137 to 140 (LTRC) the chain is on the extracellular side. Residues 141–161 (VLLCIAQCLGAIAASAMAYGL) traverse the membrane as a helical segment. The Cytoplasmic portion of the chain corresponds to 162–180 (YHGGLHTATTLKPGMSPAQ). A helical transmembrane segment spans residues 181–201 (GVIVEMILTCQLCFTVLMLAA). Residues 202 to 207 (EKHEAT) lie on the Extracellular side of the membrane. Residues 208–228 (FLAPLGIGLSVFIGELAGVFW) traverse the membrane as a helical segment. Residues 229 to 252 (TGGSMNPARSLGPAVVTLSFPSYH) are Cytoplasmic-facing. The NPA 2 signature appears at 234–236 (NPA). A helical membrane pass occupies residues 253 to 273 (WIYWVGPIAGAGLASIIYKLI). At 274 to 383 (KALEYETAQL…DGFFGEMYAD (110 aa)) the chain is on the extracellular side. Positions 332-349 (ARKSSSLVPTKSTKSGNS) are enriched in polar residues. Residues 332–383 (ARKSSSLVPTKSTKSGNSEVKKTETVVEEPAKTQPKPAPAADDGFFGEMYAD) are disordered. Over residues 350–362 (EVKKTETVVEEPA) the composition is skewed to basic and acidic residues. Residues 363 to 372 (KTQPKPAPAA) show a composition bias toward low complexity.

This sequence belongs to the MIP/aquaporin (TC 1.A.8) family.

The protein resides in the membrane. It catalyses the reaction H2O(in) = H2O(out). In terms of biological role, water channel required to facilitate the transport of water across membranes. May play a role in the vegetative growth. The polypeptide is Aquaporin-5 (Botryotinia fuckeliana (strain B05.10) (Noble rot fungus)).